The chain runs to 639 residues: Chaperone protein DnaK (639 aa).

Thr197 carries the phosphothreonine; by autocatalysis modification. The tract at residues 600 to 639 (SGAQGGAQAGPDMNAGQSNAGQNNGKQDDNVQDADFEEVK) is disordered. Residues 613–624 (NAGQSNAGQNNG) show a composition bias toward low complexity. A compositionally biased stretch (acidic residues) spans 629 to 639 (NVQDADFEEVK).

The protein belongs to the heat shock protein 70 family.

In terms of biological role, acts as a chaperone. This is Chaperone protein DnaK from Bacteroides fragilis (strain ATCC 25285 / DSM 2151 / CCUG 4856 / JCM 11019 / LMG 10263 / NCTC 9343 / Onslow / VPI 2553 / EN-2).